Here is a 78-residue protein sequence, read N- to C-terminus: Large ribosomal subunit protein eL38 (78 aa).

It belongs to the eukaryotic ribosomal protein eL38 family. In terms of assembly, component of the large ribosomal subunit (LSU). Mature yeast ribosomes consist of a small (40S) and a large (60S) subunit. The 40S small subunit contains 1 molecule of ribosomal RNA (18S rRNA) and 33 different proteins (encoded by 57 genes). The large 60S subunit contains 3 rRNA molecules (25S, 5.8S and 5S rRNA) and 46 different proteins (encoded by 81 genes).

Its subcellular location is the cytoplasm. In terms of biological role, component of the ribosome, a large ribonucleoprotein complex responsible for the synthesis of proteins in the cell. The small ribosomal subunit (SSU) binds messenger RNAs (mRNAs) and translates the encoded message by selecting cognate aminoacyl-transfer RNA (tRNA) molecules. The large subunit (LSU) contains the ribosomal catalytic site termed the peptidyl transferase center (PTC), which catalyzes the formation of peptide bonds, thereby polymerizing the amino acids delivered by tRNAs into a polypeptide chain. The nascent polypeptides leave the ribosome through a tunnel in the LSU and interact with protein factors that function in enzymatic processing, targeting, and the membrane insertion of nascent chains at the exit of the ribosomal tunnel. In Saccharomyces cerevisiae (strain ATCC 204508 / S288c) (Baker's yeast), this protein is Large ribosomal subunit protein eL38.